Consider the following 162-residue polypeptide: uncharacterized protein (162 aa).

The protein to R.meliloti R02472.

This is an uncharacterized protein from Escherichia coli (strain K12).